Here is a 139-residue protein sequence, read N- to C-terminus: Small ribosomal subunit protein uS12m (139 aa).

Residues 1–21 form a disordered region; sequence MLSTLYQNDLKKKRNRRRNRS. The segment covering 11 to 20 has biased composition (basic residues); it reads KKKRNRRRNR.

It belongs to the universal ribosomal protein uS12 family.

The protein resides in the mitochondrion. Protein S12 is involved in the translation initiation step. In Paramecium tetraurelia, this protein is Small ribosomal subunit protein uS12m (RPS12).